A 214-amino-acid polypeptide reads, in one-letter code: Thiamine-phosphate synthase (214 aa).

Residues 37–41 and Asn-73 each bind 4-amino-2-methyl-5-(diphosphooxymethyl)pyrimidine; that span reads QYREK. The Mg(2+) site is built by Asp-74 and Asp-93. Ser-112 is a 4-amino-2-methyl-5-(diphosphooxymethyl)pyrimidine binding site. Residue 139–141 participates in 2-[(2R,5Z)-2-carboxy-4-methylthiazol-5(2H)-ylidene]ethyl phosphate binding; it reads TIS. Lys-142 provides a ligand contact to 4-amino-2-methyl-5-(diphosphooxymethyl)pyrimidine. 2-[(2R,5Z)-2-carboxy-4-methylthiazol-5(2H)-ylidene]ethyl phosphate contacts are provided by residues Gly-171 and 191-192; that span reads IS.

Belongs to the thiamine-phosphate synthase family. Mg(2+) is required as a cofactor.

It catalyses the reaction 2-[(2R,5Z)-2-carboxy-4-methylthiazol-5(2H)-ylidene]ethyl phosphate + 4-amino-2-methyl-5-(diphosphooxymethyl)pyrimidine + 2 H(+) = thiamine phosphate + CO2 + diphosphate. It carries out the reaction 2-(2-carboxy-4-methylthiazol-5-yl)ethyl phosphate + 4-amino-2-methyl-5-(diphosphooxymethyl)pyrimidine + 2 H(+) = thiamine phosphate + CO2 + diphosphate. The enzyme catalyses 4-methyl-5-(2-phosphooxyethyl)-thiazole + 4-amino-2-methyl-5-(diphosphooxymethyl)pyrimidine + H(+) = thiamine phosphate + diphosphate. It functions in the pathway cofactor biosynthesis; thiamine diphosphate biosynthesis; thiamine phosphate from 4-amino-2-methyl-5-diphosphomethylpyrimidine and 4-methyl-5-(2-phosphoethyl)-thiazole: step 1/1. In terms of biological role, condenses 4-methyl-5-(beta-hydroxyethyl)thiazole monophosphate (THZ-P) and 2-methyl-4-amino-5-hydroxymethyl pyrimidine pyrophosphate (HMP-PP) to form thiamine monophosphate (TMP). In Listeria monocytogenes serotype 4a (strain HCC23), this protein is Thiamine-phosphate synthase.